A 237-amino-acid polypeptide reads, in one-letter code: Small ribosomal subunit protein uS3 (237 aa).

Positions 17–86 (VERHLGHELK…SPQIEVQQVD (70 aa)) constitute a KH type-2 domain.

The protein belongs to the universal ribosomal protein uS3 family. In terms of assembly, part of the 30S ribosomal subunit.

Binds the lower part of the 30S subunit head. The chain is Small ribosomal subunit protein uS3 from Methanospirillum hungatei JF-1 (strain ATCC 27890 / DSM 864 / NBRC 100397 / JF-1).